A 905-amino-acid polypeptide reads, in one-letter code: MCRKQPFLLPTLLGILAALMLQQGPVEAFGGSRLCKTGFLEDVYHASVYRSVHEGQPLLNVMFTDCGTDRRIQYETSNPTDFRIDGDGIVFASRTFDISPEQAEFLVYAQDEDTRELWHVTVKITLRPPHEHHSHQGFHKVREIKFSTQRNSNGLQRQKRDWVIPPINVPENARGTFPQELVRIRSDRDKNLSLRYSVTGPGADQPPIGVFIINPIGGQLSVTKPLDREQIANFHLRAHAVDVNGNQVENPIDIVINVIDMNDNRPEFLHQIWNGSIPEGSKPGTYVMTVTAIDGDDPKQPNGMLRYKILSQTPAISSPNMFTINNETGDIITLAAGLDREKVQRYTLIIQATDMEGNPTYGLSNTATAVIAVTDVNDNPPEFTAMTFYGEVPENRVDVVVANLTVTDKDQPHTPAWNAVYRIVGGDGTGRFAIKTDANSNDGLVTVVKPIDYETKSTYILTVVAENQVDLIRGIQFKPESTATVSVTVIDVNENPYFTPNPKLIRQEEGLFASKMLTTFSAQDPDRYMQQTIRYSKLSDPANWLKIDPVNGLITTTAVLDRESMYVKNNMYNATFLATDSGIPPMSGTGTLQIYLLDINDNAPYVYPQEVEICERPDPNAINITALDADINPNSGPFIFELPYSPMDIKNWTVTRLSGDHAQLSLKIGSLDYGIYNIPIHITDSGNPAMSNTSYLRVKVCSCEHEYCSTTAPIIGTGLGTGAIIAILLCIIILLTLVLMFVVWMKRRDKERQAKQLLIDPEDDVRDNILKYDEEGGGEEDQDYDLSQLQQPDTMEPDTIKPVGIRRMDERPIHAEPQYPIRSAAPHPGDIGDFINEGLKAADNDPTAPPYDSLLVFDYEGSGSTAGSLSSLNSSSSGGEQDYDYLNDWGPRFKKLADMYGGSDD.

A signal peptide spans 1–28 (MCRKQPFLLPTLLGILAALMLQQGPVEA). The propeptide occupies 29–160 (FGGSRLCKTG…NSNGLQRQKR (132 aa)). 5 consecutive Cadherin domains span residues 161–268 (DWVI…RPEF), 269–383 (LHQI…PPEF), 384–498 (TAMT…NPYF), 499–604 (TPNP…DNAP), and 605–713 (YVYP…TTAP). At 161-723 (DWVIPPINVP…IIGTGLGTGA (563 aa)) the chain is on the extracellular side. Glu-171 is a binding site for Ca(2+). N-linked (GlcNAc...) asparagine glycosylation occurs at Asn-191. Asp-227, Glu-229, Asp-260, Met-261, Asn-262, Asp-263, and Asn-264 together coordinate Ca(2+). The N-linked (GlcNAc...) asparagine glycan is linked to Asn-274. Ca(2+) is bound by residues Asp-294, Asp-296, and Asn-302. Residue Asn-326 is glycosylated (N-linked (GlcNAc...) asparagine). Asp-354 is a Ca(2+) binding site. N-linked (GlcNAc...) asparagine glycosylation is found at Asn-403, Asn-573, Asn-623, Asn-651, and Asn-692. Residues 724-745 (IIAILLCIIILLTLVLMFVVWM) traverse the membrane as a helical segment. The Cytoplasmic portion of the chain corresponds to 746–905 (KRRDKERQAK…LADMYGGSDD (160 aa)). Disordered stretches follow at residues 774–800 (EEGG…PDTI) and 862–883 (SGST…EQDY). Residues 775 to 784 (EGGGEEDQDY) show a composition bias toward acidic residues. Positions 862-879 (SGSTAGSLSSLNSSSSGG) are enriched in low complexity.

In terms of assembly, homodimer (via extracellular region). Can also form heterodimers with other cadherins (via extracellular region). Dimerization occurs in trans, i.e. with a cadherin chain from another cell.

It is found in the cell membrane. The protein localises to the sarcolemma. It localises to the cell junction. The protein resides in the cell surface. Its subcellular location is the desmosome. It is found in the adherens junction. Functionally, calcium-dependent cell adhesion protein; preferentially mediates homotypic cell-cell adhesion. Cadherins may thus contribute to the sorting of heterogeneous cell types, and thereby play an important role during embryonic development. Required for proper neurite branching. Required for pre- and postsynaptic organization. This is Cadherin-2B (cdh2-b) from Xenopus laevis (African clawed frog).